A 173-amino-acid chain; its full sequence is VQ motif-containing protein 31 (173 aa).

The VQ motif lies at 27 to 36 (FREIVQRLTG). Threonine 46 carries the post-translational modification Phosphothreonine. Disordered stretches follow at residues 76–105 (EIVK…TSPV) and 143–173 (LHPS…SGKP). Residues 86–105 (PTGTTPSSKSGNTNLLTSPV) show a composition bias toward polar residues. A phosphoserine mark is found at serine 92, serine 103, serine 146, and serine 149. A compositionally biased stretch (low complexity) spans 154 to 165 (TEPELLTLFPLT). Phosphothreonine is present on threonine 165. Phosphoserine occurs at positions 166 and 170.

Phosphorylated on serine and threonine residues by MPK6.

It localises to the nucleus. Functionally, may modulate WRKY transcription factor activities. This is VQ motif-containing protein 31 from Arabidopsis thaliana (Mouse-ear cress).